Reading from the N-terminus, the 337-residue chain is MAELHHSEHIPQWKKDEIEEIKSLIESYPLFGVIGIEGIPAKQLQSMRRDLKDFAVLKVCRNSLTRRALDQSSDDVKKMDDYIDVQTALIFTKQNPFKLYKLLEKSKTPSPIKAGMVATSDIIVEKGPTSFPPGPILGDMQGAGIPAAIDGGKVVIKETKAVAKAGEVVSQKLAAMLTRLEIYPLEVGLDLRAVLEEGSIFTPDVLAIDEEQIFSNFVQAAQQAFNMSVNAAYPTAMNINTLLAKAASDSRNVAVNATVYEPGIMDILLGKAYSKMMAIASAASSNDDALDDELKEALGAASSAVSAVEEVVEEQEEVKEEEEEESDMASGLGALFG.

Positions 309-337 are disordered; the sequence is EEVVEEQEEVKEEEEEESDMASGLGALFG. Residues 310 to 327 are compositionally biased toward acidic residues; that stretch reads EVVEEQEEVKEEEEEESD.

This sequence belongs to the universal ribosomal protein uL10 family. Part of the 50S ribosomal subunit. Forms part of the ribosomal stalk which helps the ribosome interact with GTP-bound translation factors. Forms a heptameric L10(L12)2(L12)2(L12)2 complex, where L10 forms an elongated spine to which the L12 dimers bind in a sequential fashion.

Functionally, forms part of the ribosomal stalk, playing a central role in the interaction of the ribosome with GTP-bound translation factors. The protein is Large ribosomal subunit protein uL10 of Methanococcoides burtonii (strain DSM 6242 / NBRC 107633 / OCM 468 / ACE-M).